A 110-amino-acid polypeptide reads, in one-letter code: UPF0122 protein Aflv_1766 (110 aa).

It belongs to the UPF0122 family.

In terms of biological role, might take part in the signal recognition particle (SRP) pathway. This is inferred from the conservation of its genetic proximity to ftsY/ffh. May be a regulatory protein. In Anoxybacillus flavithermus (strain DSM 21510 / WK1), this protein is UPF0122 protein Aflv_1766.